We begin with the raw amino-acid sequence, 953 residues long: Isoleucine--tRNA ligase (953 aa).

The 'HIGH' region motif lies at 57-67 (PYANGDIHIGH). Residue glutamate 582 coordinates L-isoleucyl-5'-AMP. Residues 623–627 (KMSKS) carry the 'KMSKS' region motif. Lysine 626 is a binding site for ATP. Zn(2+)-binding residues include cysteine 916, cysteine 919, cysteine 936, and cysteine 939.

It belongs to the class-I aminoacyl-tRNA synthetase family. IleS type 1 subfamily. In terms of assembly, monomer. Zn(2+) serves as cofactor.

It localises to the cytoplasm. It catalyses the reaction tRNA(Ile) + L-isoleucine + ATP = L-isoleucyl-tRNA(Ile) + AMP + diphosphate. Functionally, catalyzes the attachment of isoleucine to tRNA(Ile). As IleRS can inadvertently accommodate and process structurally similar amino acids such as valine, to avoid such errors it has two additional distinct tRNA(Ile)-dependent editing activities. One activity is designated as 'pretransfer' editing and involves the hydrolysis of activated Val-AMP. The other activity is designated 'posttransfer' editing and involves deacylation of mischarged Val-tRNA(Ile). This chain is Isoleucine--tRNA ligase, found in Bordetella parapertussis (strain 12822 / ATCC BAA-587 / NCTC 13253).